The primary structure comprises 207 residues: Large ribosomal subunit protein uL4 (207 aa).

Residues 43 to 52 (NKRQGTQSAK) show a composition bias toward polar residues. The segment at 43 to 72 (NKRQGTQSAKTRAEVRGGGRKPWKQKGTGR) is disordered. The segment covering 60 to 71 (GGRKPWKQKGTG) has biased composition (basic residues).

It belongs to the universal ribosomal protein uL4 family. As to quaternary structure, part of the 50S ribosomal subunit.

One of the primary rRNA binding proteins, this protein initially binds near the 5'-end of the 23S rRNA. It is important during the early stages of 50S assembly. It makes multiple contacts with different domains of the 23S rRNA in the assembled 50S subunit and ribosome. Functionally, forms part of the polypeptide exit tunnel. The chain is Large ribosomal subunit protein uL4 from Alkaliphilus metalliredigens (strain QYMF).